The chain runs to 139 residues: Dehydrin DHN1 (139 aa).

Residues 1 to 139 form a disordered region; it reads MEYQGQHGHA…IKEKLPGGQH (139 aa). Residues 23 to 42 are compositionally biased toward gly residues; it reads GHGGFTGGPTGTHGAAGVGG. Residues 49–58 are compositionally biased toward basic and acidic residues; that stretch reads RDGHKTDGVL. Positions 59–68 are enriched in low complexity; that stretch reads RRSGSSSSSS. The segment covering 83–98 has biased composition (basic and acidic residues); it reads KEKIKEKLPGGAHKDA. Positions 99 to 109 are enriched in low complexity; sequence AGQQQQTAMAG. The span at 120–139 shows a compositional bias: basic and acidic residues; the sequence is TGEKKGVMDKIKEKLPGGQH.

Belongs to the plant dehydrin family.

The polypeptide is Dehydrin DHN1 (DHN1) (Hordeum vulgare (Barley)).